The following is a 103-amino-acid chain: Protein Rev (103 aa).

Serine 5 is subject to Phosphoserine; by host CK2. Positions 17–25 are homomultimerization; that stretch reads IIKILYQSN. Disordered stretches follow at residues 24–49 and 82–103; these read SNPC…RRQA and IRDP…TKDN. Positions 33–49 match the Nuclear localization signal and RNA-binding (RRE) motif; sequence SRNARKNRRRRWRRRQA. Residues 35–48 are compositionally biased toward basic residues; sequence NARKNRRRRWRRRQ. Positions 72–83 match the Nuclear export signal and binding to XPO1 motif; the sequence is VDLPPLEQLNIR.

This sequence belongs to the HIV-1 REV protein family. Homomultimer; when bound to the RRE. Multimeric assembly is essential for activity and may involve XPO1. Binds to human KPNB1, XPO1, TNPO1, RANBP5 and IPO7. Interacts with the viral Integrase. Interacts with human KHDRBS1. Interacts with human NAP1; this interaction decreases Rev multimerization and stimulates its activity. Interacts with human DEAD-box helicases DDX3 and DDX24; these interactions may serve for viral RNA export to the cytoplasm and packaging, respectively. Interacts with human PSIP1; this interaction may inhibit HIV-1 DNA integration by promoting dissociation of the Integrase-LEDGF/p75 complex. Post-translationally, asymmetrically arginine dimethylated at one site by host PRMT6. Methylation impairs the RNA-binding activity and export of viral RNA from the nucleus to the cytoplasm. In terms of processing, phosphorylated by protein kinase CK2. Presence of, and maybe binding to the N-terminus of the regulatory beta subunit of CK2 is necessary for CK2-mediated Rev's phosphorylation.

It is found in the host nucleus. Its subcellular location is the host nucleolus. It localises to the host cytoplasm. Functionally, escorts unspliced or incompletely spliced viral pre-mRNAs (late transcripts) out of the nucleus of infected cells. These pre-mRNAs carry a recognition sequence called Rev responsive element (RRE) located in the env gene, that is not present in fully spliced viral mRNAs (early transcripts). This function is essential since most viral proteins are translated from unspliced or partially spliced pre-mRNAs which cannot exit the nucleus by the pathway used by fully processed cellular mRNAs. Rev itself is translated from a fully spliced mRNA that readily exits the nucleus. Rev's nuclear localization signal (NLS) binds directly to KPNB1/Importin beta-1 without previous binding to KPNA1/Importin alpha-1. KPNB1 binds to the GDP bound form of RAN (Ran-GDP) and targets Rev to the nucleus. In the nucleus, the conversion from Ran-GDP to Ran-GTP dissociates Rev from KPNB1 and allows Rev's binding to the RRE in viral pre-mRNAs. Rev multimerization on the RRE via cooperative assembly exposes its nuclear export signal (NES) to the surface. Rev can then form a complex with XPO1/CRM1 and Ran-GTP, leading to nuclear export of the complex. Conversion from Ran-GTP to Ran-GDP mediates dissociation of the Rev/RRE/XPO1/RAN complex, so that Rev can return to the nucleus for a subsequent round of export. Beside KPNB1, also seems to interact with TNPO1/Transportin-1, RANBP5/IPO5 and IPO7/RANBP7 for nuclear import. The nucleoporin-like HRB/RIP is an essential cofactor that probably indirectly interacts with Rev to release HIV RNAs from the perinuclear region to the cytoplasm. The sequence is that of Protein Rev from Human immunodeficiency virus type 1 group O (isolate MVP5180) (HIV-1).